A 215-amino-acid chain; its full sequence is 3-dehydroquinate dehydratase (215 aa).

3-dehydroquinate-binding positions include 30 to 32 (EVR) and R62. Residue H114 is the Proton donor/acceptor of the active site. K140 functions as the Schiff-base intermediate with substrate in the catalytic mechanism. 3-dehydroquinate contacts are provided by R178 and Q201.

Belongs to the type-I 3-dehydroquinase family. In terms of assembly, homodimer.

It carries out the reaction 3-dehydroquinate = 3-dehydroshikimate + H2O. It functions in the pathway metabolic intermediate biosynthesis; chorismate biosynthesis; chorismate from D-erythrose 4-phosphate and phosphoenolpyruvate: step 3/7. In terms of biological role, involved in the third step of the chorismate pathway, which leads to the biosynthesis of aromatic amino acids. Catalyzes the cis-dehydration of 3-dehydroquinate (DHQ) and introduces the first double bond of the aromatic ring to yield 3-dehydroshikimate. The chain is 3-dehydroquinate dehydratase from Methanopyrus kandleri (strain AV19 / DSM 6324 / JCM 9639 / NBRC 100938).